The chain runs to 244 residues: MSIRFTHCFTSSSSLPCYILRHLPFSNFNRYSTASHDNVNAFRLLMRRFAQPVVIITSGFADGHRAGMTASSFTPVSLTPNPVISFNIKIPSRTANAIQQSNRVIVHLLSSSIKKHSEWASLLAKQKHQINPLMNSEKNSTSVEDLPGSNRTQQTSSHSLLHPLHPIDVSLSKEGLPCLVDSLGLLHCSIIHSYQVQDHILFVANVERVEHGSSPLESSSGLVYYNRNYCSTSPLSPIIDSFES.

A disordered region spans residues 131–158 (NPLMNSEKNSTSVEDLPGSNRTQQTSSH). Over residues 132 to 158 (PLMNSEKNSTSVEDLPGSNRTQQTSSH) the composition is skewed to polar residues.

The protein resides in the mitochondrion. The catalysed reaction is a reduced flavin + NAD(+) = an oxidized flavin + NADH + 2 H(+). In terms of biological role, NADH-dependent flavin reductase that acts in the coenzyme Q biosynthetic pathway. Required for synthesis of the p-hydroxybenzoic acid (PHB) precursor to form a quinone backbone. The chain is NAD reductase coq12 from Schizosaccharomyces pombe (strain 972 / ATCC 24843) (Fission yeast).